The primary structure comprises 406 residues: NIPA-like protein 3 (406 aa).

Transmembrane regions (helical) follow at residues 33–53 (NLIG…ALNL), 76–96 (WWLG…SYAF), 101–121 (LIVP…IIFI), and 135–155 (VLSF…VTFA). N-linked (GlcNAc...) asparagine glycosylation occurs at Asn166. Helical transmembrane passes span 171-191 (LVSW…CLLL), 202-222 (IVVI…TVKA), 240-260 (PIFY…AAFL), 271-291 (LIAS…GAIF), and 300-320 (VLHI…VFLI). The residue at position 372 (Ser372) is a Phosphoserine.

Belongs to the NIPA family.

The protein localises to the membrane. The polypeptide is NIPA-like protein 3 (NIPAL3) (Homo sapiens (Human)).